The sequence spans 194 residues: uncharacterized protein (194 aa).

Positions 25–156 are disordered; the sequence is PSWACRRGGP…ESPLGTLPCS (132 aa). The segment covering 43–57 has biased composition (polar residues); that stretch reads GPSTVPVTPTAGSCQ. Over residues 104 to 113 the composition is skewed to low complexity; it reads SSSPGPSFHL.

This is an uncharacterized protein from Homo sapiens (Human).